We begin with the raw amino-acid sequence, 237 residues long: tRNA1(Val) (adenine(37)-N6)-methyltransferase (237 aa).

It belongs to the methyltransferase superfamily. tRNA (adenine-N(6)-)-methyltransferase family.

It localises to the cytoplasm. It catalyses the reaction adenosine(37) in tRNA1(Val) + S-adenosyl-L-methionine = N(6)-methyladenosine(37) in tRNA1(Val) + S-adenosyl-L-homocysteine + H(+). Specifically methylates the adenine in position 37 of tRNA(1)(Val) (anticodon cmo5UAC). This is tRNA1(Val) (adenine(37)-N6)-methyltransferase from Bacteroides thetaiotaomicron (strain ATCC 29148 / DSM 2079 / JCM 5827 / CCUG 10774 / NCTC 10582 / VPI-5482 / E50).